The chain runs to 211 residues: Ribonuclease T (211 aa).

Residues 24 to 198 form the Exonuclease domain; it reads VVVDVETGGF…YDAEKTAHLF (175 aa). Residues Asp-27, Glu-29, His-185, and Asp-190 each coordinate Mg(2+). Catalysis depends on His-185, which acts as the Proton donor/acceptor.

Belongs to the RNase T family. Homodimer. Mg(2+) is required as a cofactor.

Its function is as follows. Trims short 3' overhangs of a variety of RNA species, leaving a one or two nucleotide 3' overhang. Responsible for the end-turnover of tRNA: specifically removes the terminal AMP residue from uncharged tRNA (tRNA-C-C-A). Also appears to be involved in tRNA biosynthesis. The chain is Ribonuclease T from Xylella fastidiosa (strain 9a5c).